We begin with the raw amino-acid sequence, 116 residues long: Hydrogenase maturation factor HypA (116 aa).

His2 contacts Ni(2+). Zn(2+) contacts are provided by Cys73, Cys76, Cys89, and Cys92.

The protein belongs to the HypA/HybF family.

In terms of biological role, involved in the maturation of [NiFe] hydrogenases. Required for nickel insertion into the metal center of the hydrogenase. The chain is Hydrogenase maturation factor HypA from Chlorobium limicola (strain DSM 245 / NBRC 103803 / 6330).